The chain runs to 286 residues: Aspartate/glutamate leucyltransferase (286 aa).

Belongs to the R-transferase family. Bpt subfamily.

The protein resides in the cytoplasm. The enzyme catalyses N-terminal L-glutamyl-[protein] + L-leucyl-tRNA(Leu) = N-terminal L-leucyl-L-glutamyl-[protein] + tRNA(Leu) + H(+). It catalyses the reaction N-terminal L-aspartyl-[protein] + L-leucyl-tRNA(Leu) = N-terminal L-leucyl-L-aspartyl-[protein] + tRNA(Leu) + H(+). Functions in the N-end rule pathway of protein degradation where it conjugates Leu from its aminoacyl-tRNA to the N-termini of proteins containing an N-terminal aspartate or glutamate. This chain is Aspartate/glutamate leucyltransferase, found in Jannaschia sp. (strain CCS1).